Reading from the N-terminus, the 279-residue chain is MSFQDLEAGTRSPAPNRFTGGRQQRPSSRGDPSQEVAAGIFRISTAVNSFFRLVNSIGTPKDTLELRDKLQKTRLQISELVKNTSAKLKEASEADLHGSASQIKKIADAKLAKDFQSVLKEFQKAQRLAAEREITYTPVVTKEIPTSYNAPELDTESLRISQQQALLLQSRRQEVVFLDNEITFNEAIIEEREQGIREIEDQIRDVNGMFKDLALMVNHQGNIVDDISSNLDNSHAATTQATVQLRKAAKTQRSNSSLTCLLILIFGIVLLIVIIVVLV.

Positions 1–34 (MSFQDLEAGTRSPAPNRFTGGRQQRPSSRGDPSQ) are disordered. Residue S2 is modified to N-acetylserine. Over 2 to 258 (SFQDLEAGTR…AKTQRSNSSL (257 aa)) the chain is Cytoplasmic. Polar residues predominate over residues 21–31 (GRQQRPSSRGD). Positions 65–94 (ELRDKLQKTRLQISELVKNTSAKLKEASEA) form a coiled coil. The t-SNARE coiled-coil homology domain maps to 186 to 248 (EAIIEEREQG…TQATVQLRKA (63 aa)). Residues 259 to 279 (TCLLILIFGIVLLIVIIVVLV) traverse the membrane as a helical; Anchor for type IV membrane protein segment.

This sequence belongs to the syntaxin family. In terms of assembly, interacts with VTI11 and SYP51 to form a t-SNARE complex and with alpha-SNAP to form a 20S complex. In terms of tissue distribution, a high level expression is seen in the roots while a low level expression is seen in the leaves.

The protein localises to the prevacuolar compartment membrane. May function in the docking or fusion of transport vesicles with the prevacuolar membrane. In Arabidopsis thaliana (Mouse-ear cress), this protein is Syntaxin-21 (SYP21).